The chain runs to 170 residues: Transcription factor E (170 aa).

The HTH TFE/IIEalpha-type domain occupies methionine 1–arginine 93.

This sequence belongs to the TFE family. In terms of assembly, monomer. Interaction with RNA polymerase subunits RpoF and RpoE is necessary for Tfe stimulatory transcription activity. Able to interact with Tbp and RNA polymerase in the absence of DNA promoter. Interacts both with the preinitiation and elongation complexes.

In terms of biological role, transcription factor that plays a role in the activation of archaeal genes transcribed by RNA polymerase. Facilitates transcription initiation by enhancing TATA-box recognition by TATA-box-binding protein (Tbp), and transcription factor B (Tfb) and RNA polymerase recruitment. Not absolutely required for transcription in vitro, but particularly important in cases where Tbp or Tfb function is not optimal. It dynamically alters the nucleic acid-binding properties of RNA polymerases by stabilizing the initiation complex and destabilizing elongation complexes. Seems to translocate with the RNA polymerase following initiation and acts by binding to the non template strand of the transcription bubble in elongation complexes. The protein is Transcription factor E of Pyrobaculum neutrophilum (strain DSM 2338 / JCM 9278 / NBRC 100436 / V24Sta) (Thermoproteus neutrophilus).